We begin with the raw amino-acid sequence, 916 residues long: Dual serine/threonine and tyrosine protein kinase (916 aa).

Positions 1 to 19 (MQRDGTRSARRMDEGDRRT) are enriched in basic and acidic residues. A disordered region spans residues 1-27 (MQRDGTRSARRMDEGDRRTGSAGRSGS). A Protein kinase domain is found at 641-895 (PRIGRELGRG…PLMGIVQPML (255 aa)). ATP contacts are provided by residues 647-655 (LGRGQYGVV) and Lys-670. The active-site Proton acceptor is Asp-766.

Belongs to the protein kinase superfamily. Ser/Thr protein kinase family.

The protein localises to the cytoplasm. It is found in the cell membrane. Its subcellular location is the apical cell membrane. The protein resides in the basolateral cell membrane. It localises to the cell junction. The enzyme catalyses L-seryl-[protein] + ATP = O-phospho-L-seryl-[protein] + ADP + H(+). It carries out the reaction L-threonyl-[protein] + ATP = O-phospho-L-threonyl-[protein] + ADP + H(+). It catalyses the reaction L-tyrosyl-[protein] + ATP = O-phospho-L-tyrosyl-[protein] + ADP + H(+). Functionally, may act as a positive regulator of ERK phosphorylation downstream of fibroblast growth factor-receptor activation. May induce both caspase-dependent apoptosis and caspase-independent cell death. May play a role in the embryonic development. This is Dual serine/threonine and tyrosine protein kinase (dstyk) from Xenopus laevis (African clawed frog).